The chain runs to 268 residues: MSHAPFIAVIPARLASTRLPNKPLADIGGKPMVVRVAERAHQSSAARVVVATDAVSVADACMQHHIEAVLTRADHASGTDRLAEVATVLALPDDAIVVNVQGDEPLIAPTLIDNVAAHLRDHADCAIATAAHPIRAAADIFNPNVVKVVLDAAERALLFSRAPLPWARDAWTPAALDQPAAERPLPAMPVLRHIGIYAYRAAFLRRFPQLAAAPLEQTEQLEQLRAMWHGERIAVLTTDDAPAAGVDTAEDLARVRAAWSDLLSQDGP.

The protein belongs to the KdsB family.

It localises to the cytoplasm. The catalysed reaction is 3-deoxy-alpha-D-manno-oct-2-ulosonate + CTP = CMP-3-deoxy-beta-D-manno-octulosonate + diphosphate. It functions in the pathway nucleotide-sugar biosynthesis; CMP-3-deoxy-D-manno-octulosonate biosynthesis; CMP-3-deoxy-D-manno-octulosonate from 3-deoxy-D-manno-octulosonate and CTP: step 1/1. Its pathway is bacterial outer membrane biogenesis; lipopolysaccharide biosynthesis. Its function is as follows. Activates KDO (a required 8-carbon sugar) for incorporation into bacterial lipopolysaccharide in Gram-negative bacteria. The sequence is that of 3-deoxy-manno-octulosonate cytidylyltransferase from Ralstonia nicotianae (strain ATCC BAA-1114 / GMI1000) (Ralstonia solanacearum).